We begin with the raw amino-acid sequence, 198 residues long: MKFTVFASLFASAAAFAPAQQAARTSVATNMAFESELGAQAPLGFYDPLGLVADGDQEKFDRLRYVEIKHGRISMLAVAGYLAQEAGWRLGGDIALDGTKFADIPNGFAALSAIPQAGLIQIIAFIGFLETSVMKDITGGEFVGDFRNGYIDFGWDSFDQETKLRKRAIELNQGRAAQMGILALMVHEQLGVNILPGV.

A chloroplast-targeting transit peptide spans methionine 1 to methionine 31. Helical transmembrane passes span isoleucine 73–isoleucine 94, isoleucine 114–methionine 134, and glycine 174–proline 196.

The protein belongs to the fucoxanthin chlorophyll protein family. The LHC complex of chromophytic algae is composed of fucoxanthin, chlorophyll A and C bound non-covalently by fucoxanthin chlorophyll proteins (FCPs). The ratio of the pigments in LHC; fucoxanthin: chlorophyll C: chlorophyll A; (0.6-1): (0.1-0.3): (1).

It localises to the plastid. It is found in the chloroplast thylakoid membrane. In terms of biological role, the light-harvesting complex (LHC) functions as a light receptor, it captures and delivers excitation energy to photosystems with which it is closely associated. Energy is transferred from the carotenoid and chlorophyll C (or B) to chlorophyll A and the photosynthetic reaction centers where it is used to synthesize ATP and reducing power. This is Fucoxanthin-chlorophyll a-c binding protein B, chloroplastic (FCPB) from Phaeodactylum tricornutum (Diatom).